Reading from the N-terminus, the 232-residue chain is Somatolactin (232 aa).

Residues 1–16 (MHNWKGVWLCSLFLTF) form the signal peptide. Intrachain disulfides connect cysteine 31-cysteine 41, cysteine 91-cysteine 206, and cysteine 223-cysteine 231. Asparagine 147 carries N-linked (GlcNAc...) asparagine glycosylation.

It belongs to the somatotropin/prolactin family. As to expression, pituitary gland.

The protein resides in the secreted. The sequence is that of Somatolactin from Protopterus annectens (African lungfish).